We begin with the raw amino-acid sequence, 506 residues long: Kynureninase 1 (506 aa).

Residues leucine 141, threonine 142, 169–172, aspartate 254, histidine 257, and tyrosine 279 each bind pyridoxal 5'-phosphate; that span reads FPSD. Lysine 280 is modified (N6-(pyridoxal phosphate)lysine). The segment covering 303-319 has biased composition (low complexity); sequence ETAPTTTPDGTNGNPKT. Residues 303–322 form a disordered region; the sequence is ETAPTTTPDGTNGNPKTISD. The pyridoxal 5'-phosphate site is built by tryptophan 334 and asparagine 362.

It belongs to the kynureninase family. As to quaternary structure, homodimer. Pyridoxal 5'-phosphate serves as cofactor.

The protein resides in the cytoplasm. The enzyme catalyses L-kynurenine + H2O = anthranilate + L-alanine + H(+). The catalysed reaction is 3-hydroxy-L-kynurenine + H2O = 3-hydroxyanthranilate + L-alanine + H(+). The protein operates within amino-acid degradation; L-kynurenine degradation; L-alanine and anthranilate from L-kynurenine: step 1/1. Its pathway is cofactor biosynthesis; NAD(+) biosynthesis; quinolinate from L-kynurenine: step 2/3. Catalyzes the cleavage of L-kynurenine (L-Kyn) and L-3-hydroxykynurenine (L-3OHKyn) into anthranilic acid (AA) and 3-hydroxyanthranilic acid (3-OHAA), respectively. The sequence is that of Kynureninase 1 from Phaeosphaeria nodorum (strain SN15 / ATCC MYA-4574 / FGSC 10173) (Glume blotch fungus).